The sequence spans 383 residues: BRISC and BRCA1-A complex member 2 (383 aa).

Met1 carries the N-acetylmethionine modification. Phosphoserine is present on Ser2. 2 UEV-like regions span residues 30–147 (DATN…TLLE) and 275–364 (IAAF…RAKA).

Belongs to the BABAM2 family. In terms of assembly, component of the ARISC complex, at least composed of UIMC1/RAP80, ABRAXAS1, BRCC3/BRCC36, BABAM2 and BABAM1/NBA1. Component of the BRCA1-A complex, at least composed of BRCA1, BARD1, UIMC1/RAP80, ABRAXAS1, BRCC3/BRCC36, BABAM2 and BABAM1/NBA1. In the BRCA1-A complex, interacts directly with ABRAXAS1, BRCC3/BRCC36 and BABAM1/NBA1. Binds polyubiquitin. Component of the BRISC complex, at least composed of ABRAXAS2, BRCC3/BRCC36, BABAM2 and BABAM1/NBA1. Identified in a complex with SHMT2 and the other subunits of the BRISC complex. Component of the BRCA1/BRCA2 containing complex (BRCC), which also contains BRCA1, BRCA2, BARD1, BRCC3/BRCC36 and RAD51. BRCC is a ubiquitin E3 ligase complex that enhances cellular survival following DNA damage. May interact with FAS and TNFRSF1A.

The protein localises to the cytoplasm. It is found in the nucleus. Its function is as follows. Component of the BRCA1-A complex, a complex that specifically recognizes 'Lys-63'-linked ubiquitinated histones H2A and H2AX at DNA lesions sites, leading to target the BRCA1-BARD1 heterodimer to sites of DNA damage at double-strand breaks (DSBs). The BRCA1-A complex also possesses deubiquitinase activity that specifically removes 'Lys-63'-linked ubiquitin on histones H2A and H2AX. In the BRCA1-A complex, it acts as an adapter that bridges the interaction between BABAM1/NBA1 and the rest of the complex, thereby being required for the complex integrity and modulating the E3 ubiquitin ligase activity of the BRCA1-BARD1 heterodimer. Component of the BRISC complex, a multiprotein complex that specifically cleaves 'Lys-63'-linked ubiquitin in various substrates. Within the BRISC complex, acts as an adapter that bridges the interaction between BABAM1/NBA1 and the rest of the complex, thereby being required for the complex integrity. The BRISC complex is required for normal mitotic spindle assembly and microtubule attachment to kinetochores via its role in deubiquitinating NUMA1. The BRISC complex plays a role in interferon signaling via its role in the deubiquitination of the interferon receptor IFNAR1; deubiquitination increases IFNAR1 activity by enhancing its stability and cell surface expression. Down-regulates the response to bacterial lipopolysaccharide (LPS) via its role in IFNAR1 deubiquitination. May play a role in homeostasis or cellular differentiation in cells of neural, epithelial and germline origins. May also act as a death receptor-associated anti-apoptotic protein, which inhibits the mitochondrial apoptotic pathway. May regulate TNF-alpha signaling through its interactions with TNFRSF1A; however these effects may be indirect. This chain is BRISC and BRCA1-A complex member 2 (BABAM2), found in Pongo abelii (Sumatran orangutan).